The following is a 199-amino-acid chain: Probable chemoreceptor glutamine deamidase CheD (199 aa).

The protein belongs to the CheD family.

The enzyme catalyses L-glutaminyl-[protein] + H2O = L-glutamyl-[protein] + NH4(+). Probably deamidates glutamine residues to glutamate on methyl-accepting chemotaxis receptors (MCPs), playing an important role in chemotaxis. This chain is Probable chemoreceptor glutamine deamidase CheD, found in Cereibacter sphaeroides (strain ATCC 17025 / ATH 2.4.3) (Rhodobacter sphaeroides).